The primary structure comprises 184 residues: Rhox homeobox family member 1 (184 aa).

The interval 26–104 (QLGAASSAEG…GPQPENMQPR (79 aa)) is disordered. A compositionally biased stretch (low complexity) spans 88 to 99 (PAQAAMEGPQPE). Positions 103-162 (PRTRRTKFTLLQVEELESVFRHTQYPDVPTRRELAENLGVTEDKVRVWFKNKRARCRRHQ) form a DNA-binding region, homeobox. The Nuclear localization signal signature appears at 155 to 164 (RARCRRHQRE).

The protein belongs to the paired-like homeobox family. PEPP subfamily. In terms of assembly, does not interact with itself. Ovary, testis and epididymis. Also detected in the prostate and the mammary gland. Expressed in many tumor cell lines derived from acute lymphocytic leukemia, prostate, endometrial adenocarcinoma, melanoma, bladder carcinoma, colon carcinoma, erythroleukemia and breast carcinoma. Not expressed in placenta. In testis, mainly expressed in germ cells, but also detected in somatic cells such as Sertoli cells, Leydig cells and peritubular cells.

Its subcellular location is the nucleus. Its function is as follows. Transcription factor maybe involved in reproductive processes. Modulates expression of target genes encoding proteins involved in processes relevant to spermatogenesis. The polypeptide is Rhox homeobox family member 1 (Homo sapiens (Human)).